A 128-amino-acid chain; its full sequence is 3-aminoacrylate deaminase RutC (128 aa).

The protein belongs to the RutC family.

It catalyses the reaction (Z)-3-aminoacrylate + H2O + H(+) = 3-oxopropanoate + NH4(+). Its function is as follows. Involved in pyrimidine catabolism. Catalyzes the deamination of 3-aminoacrylate to malonic semialdehyde, a reaction that can also occur spontaneously. RutC may facilitate the reaction and modulate the metabolic fitness, rather than catalyzing essential functions. In Pantoea ananatis (strain LMG 20103), this protein is 3-aminoacrylate deaminase RutC.